Here is a 192-residue protein sequence, read N- to C-terminus: Protein GrpE (192 aa).

Over residues 1–20 the composition is skewed to basic and acidic residues; it reads MEERNEQVVEEVKEEVKEAQ. Residues 1-39 form a disordered region; the sequence is MEERNEQVVEEVKEEVKEAQVEEAVTSEDSEESVEEKSE. Positions 25 to 34 are enriched in acidic residues; it reads VTSEDSEESV.

The protein belongs to the GrpE family. As to quaternary structure, homodimer.

The protein localises to the cytoplasm. Functionally, participates actively in the response to hyperosmotic and heat shock by preventing the aggregation of stress-denatured proteins, in association with DnaK and GrpE. It is the nucleotide exchange factor for DnaK and may function as a thermosensor. Unfolded proteins bind initially to DnaJ; upon interaction with the DnaJ-bound protein, DnaK hydrolyzes its bound ATP, resulting in the formation of a stable complex. GrpE releases ADP from DnaK; ATP binding to DnaK triggers the release of the substrate protein, thus completing the reaction cycle. Several rounds of ATP-dependent interactions between DnaJ, DnaK and GrpE are required for fully efficient folding. The polypeptide is Protein GrpE (Bacillus cereus (strain ATCC 10987 / NRS 248)).